Here is a 234-residue protein sequence, read N- to C-terminus: Ubiquinone biosynthesis O-methyltransferase (234 aa).

Residues Arg-36, Gly-56, Asp-77, and Met-125 each contribute to the S-adenosyl-L-methionine site.

It belongs to the methyltransferase superfamily. UbiG/COQ3 family.

The enzyme catalyses a 3-demethylubiquinol + S-adenosyl-L-methionine = a ubiquinol + S-adenosyl-L-homocysteine + H(+). It carries out the reaction a 3-(all-trans-polyprenyl)benzene-1,2-diol + S-adenosyl-L-methionine = a 2-methoxy-6-(all-trans-polyprenyl)phenol + S-adenosyl-L-homocysteine + H(+). It functions in the pathway cofactor biosynthesis; ubiquinone biosynthesis. In terms of biological role, O-methyltransferase that catalyzes the 2 O-methylation steps in the ubiquinone biosynthetic pathway. The sequence is that of Ubiquinone biosynthesis O-methyltransferase from Actinobacillus pleuropneumoniae serotype 5b (strain L20).